Consider the following 698-residue polypeptide: Transferrin-binding protein B (698 aa).

An N-terminal signal peptide occupies residues 1 to 20; sequence MNNPLVNQAAMVLPVFLLSA. A lipid anchor (N-palmitoyl cysteine) is attached at Cys-21. Cys-21 carries the S-diacylglycerol cysteine lipid modification. Disordered stretches follow at residues 33–58, 83–102, 294–324, 349–383, 428–479, and 669–698; these read VDTE…QKDQ, IKLS…KNPS, FSGK…SLSG, GSAK…SENS, ESGK…GDAN, and TKNA…KPVQ. A compositionally biased stretch (polar residues) spans 46–56; sequence DVSSEKPQAQK. Residues 299 to 315 show a composition bias toward basic and acidic residues; sequence EATDKPKNDGETKEHPF. Residues 369-383 are compositionally biased toward low complexity; it reads AAASNGAAGTSSENS. Residues 460-476 are compositionally biased toward polar residues; it reads QAGTAENGNPAASNTAG. Residues 671-686 show a composition bias toward low complexity; the sequence is NATDASGNGNSASSAT.

Belongs to the TbpB family. In terms of assembly, binds only human holo-transferrin (TF), via the TF C-terminus. Forms a large complex with TbpA and TF. Interacts via its C-terminal domain with Slam1.

Its subcellular location is the cell outer membrane. The protein localises to the cell surface. Its function is as follows. Neisseria acquires iron by extracting it from serum transferrin (TF) in its human host. Acts as a TF receptor and is required for TF utilization. Involved in the initial capture of TF. Helps select only those TF molecules that can be used as an iron source and concentrates them on the cell surface, maintaining the iron-loaded status of the TF C-terminal lobe until its delivery to TbpA. The polypeptide is Transferrin-binding protein B (Neisseria meningitidis serogroup A / serotype 4A (strain DSM 15465 / Z2491)).